The following is a 260-amino-acid chain: uncharacterized protein (260 aa).

One can recognise an ABC transporter domain in the interval 4 to 231 (LHVDHVTHTY…PKELAAMLPF (228 aa)). An ATP-binding site is contributed by 40-47 (GPSGCGKT).

The protein belongs to the ABC transporter superfamily.

This is an uncharacterized protein from Bacillus subtilis (strain 168).